We begin with the raw amino-acid sequence, 165 residues long: Nucleotide-binding protein Rcas_1283 (165 aa).

It belongs to the YajQ family.

In terms of biological role, nucleotide-binding protein. This Roseiflexus castenholzii (strain DSM 13941 / HLO8) protein is Nucleotide-binding protein Rcas_1283.